Consider the following 224-residue polypeptide: TM2 domain-containing protein amaretto (224 aa).

The signal sequence occupies residues 1 to 18 (MRIFYGLLAFLVARQHDA). Residues 19-154 (QAIQARSDKE…FLRAGVPCVR (136 aa)) lie on the Extracellular side of the membrane. N102 and N142 each carry an N-linked (GlcNAc...) asparagine glycan. Residues 155–175 (YTDHYFVTTLIYSMLLGFLGM) traverse the membrane as a helical segment. Positions 157–205 (DHYFVTTLIYSMLLGFLGMDRFCLGQTGTAVGKLLTMGGVGVWWIIDVI) constitute a TM2 domain. Residues 176–189 (DRFCLGQTGTAVGK) lie on the Cytoplasmic side of the membrane. The helical transmembrane segment at 190-210 (LLTMGGVGVWWIIDVILLITN) threads the bilayer. The Extracellular segment spans residues 211-224 (NLLPEDGSNWNPYV).

It belongs to the TM2 family.

The protein resides in the membrane. In terms of biological role, positive regulator of Notch signaling. Maternal neurogenic factor involved in Notch signaling-dependent neuroectodermal specification during early embryogenesis. Functions cooperatively with amx/TM2D3 and bisc/TM2D1. This Drosophila melanogaster (Fruit fly) protein is TM2 domain-containing protein amaretto.